Reading from the N-terminus, the 265-residue chain is V0 assembly protein 1 (265 aa).

The N-terminal stretch at 1–24 (MVFGQLYALFIFTLSCCISKTVQA) is a signal peptide. Residues 25–223 (DSSKESSSFI…ILSSIWTEGL (199 aa)) are Vacuolar-facing. Asparagine 69, asparagine 104, and asparagine 172 each carry an N-linked (GlcNAc...) asparagine glycan. The chain crosses the membrane as a helical span at residues 224 to 244 (LMCLIVSALLLFILIVALSWI). Topologically, residues 245–265 (SNLDITYGALEKSTNPIKKNN) are cytoplasmic. Residues 262–265 (KKNN) carry the ER retention motif motif.

The protein belongs to the VOA1 family. V-ATPase is a heteromultimeric enzyme composed of a peripheral catalytic V1 complex (components A to H) attached to an integral membrane V0 proton pore complex (components: a, c, c', c'', d, e, f and VOA1). Interacts with VMA21. Associates with the assembling V0 complex.

It localises to the vacuole membrane. It is found in the endoplasmic reticulum membrane. Functionally, accessory component of the V0 complex of vacuolar(H+)-ATPase (V-ATPase), a multisubunit enzyme composed of a peripheral complex (V1) that hydrolyzes ATP and a membrane integral complex (V0) that translocates protons. V-ATPase is responsible for acidifying and maintaining the pH of intracellular compartments. Functions with VMA21 in assembly of the V0 complex. This chain is V0 assembly protein 1 (VOA1), found in Saccharomyces cerevisiae (strain ATCC 204508 / S288c) (Baker's yeast).